A 215-amino-acid chain; its full sequence is Variable small protein 2 (215 aa).

A signal peptide spans Met-1–Ser-18. The N-palmitoyl cysteine moiety is linked to residue Cys-19. A lipid anchor (S-diacylglycerol cysteine) is attached at Cys-19.

The protein belongs to the variable small protein (Vsp) family.

The protein localises to the cell outer membrane. Functionally, the Vlp and Vsp proteins are antigenically distinct proteins, only one vlp or vsp gene is transcriptionally active at any one time. Switching between these genes is a mechanism of host immune response evasion. The protein is Variable small protein 2 of Borrelia hermsii.